Consider the following 246-residue polypeptide: DNA repair protein RecO (246 aa).

Belongs to the RecO family.

In terms of biological role, involved in DNA repair and RecF pathway recombination. In Proteus mirabilis (strain HI4320), this protein is DNA repair protein RecO.